Consider the following 153-residue polypeptide: AEEAPRRVKLSQRQMQELKEAFTMIDQDRDGFIGMEDLKDMFSSLGRVPPDDELNAMLKECPGQLNFTAFLTLFGEKVSGTDPEDALRNAFSMFDEDGQGFIPEDYLKDLLENMGDNFSKEEIKNVWKDAPLKNKQFNYNKMVDIKGKAEDED.

Ala-1 is modified (blocked amino end (Ala)). 2 consecutive EF-hand domains span residues 13 to 48 and 82 to 117; these read RQMQ…LGRV and DPED…MGDN. Ca(2+) contacts are provided by Asp-26, Asp-28, Asp-30, and Asp-37.

Functionally, in molluscan muscle, calcium regulation is associated with myosin rather than with actin. Muscle myosin contains two types of light chains: the catalytic light chain, essential for ATPase activity, and the regulatory light chain, a calcium-binding protein responsible for Ca(2+) dependent binding and Ca(2+) dependent Mg-ATPase activity. This Todarodes pacificus (Japanese flying squid) protein is Myosin regulatory light chain LC-2, mantle muscle.